A 263-amino-acid polypeptide reads, in one-letter code: Aminoglycoside 3'-phosphotransferase (263 aa).

Aspartate 183 acts as the Proton acceptor in catalysis.

This sequence belongs to the aminoglycoside phosphotransferase family.

The catalysed reaction is kanamycin A + ATP = kanamycin 3'-phosphate + ADP + H(+). Resistance to kanamycin and structurally-related aminoglycosides, including amikacin. This Streptomyces ribosidificus protein is Aminoglycoside 3'-phosphotransferase (rph).